A 481-amino-acid polypeptide reads, in one-letter code: Innexin inx6 (481 aa).

The Cytoplasmic portion of the chain corresponds to 1 to 21 (MYAAVKPLSNYLRLKTVRIYD). Residues 22-42 (PIFTLHSKCTIVILLTCTFLL) traverse the membrane as a helical segment. The Extracellular segment spans residues 43-144 (SAKQYFGEPI…VTKRMYLRYY (102 aa)). The chain crosses the membrane as a helical span at residues 145-165 (QWVFMILLFQSLLFYFPSFLW). The Cytoplasmic portion of the chain corresponds to 166-220 (KVWEGQRMEQLCCEVGDALIVEATYRTRLQMLTRYFRAQFAPIHWCYSIKYAFCE). Residues 221-241 (LLNVFISILNFWLMDVVFNGF) traverse the membrane as a helical segment. Over 242 to 302 (WYKYIHALAA…VLPLNILNEK (61 aa)) the chain is Extracellular. Residues 303–323 (IFAVLYVWFLFIALLAIMNIL) traverse the membrane as a helical segment. Topologically, residues 324–481 (YRLLVICCPE…MDRFFHESHA (158 aa)) are cytoplasmic.

The protein belongs to the pannexin family. As to expression, uniform expression in the imaginal wing disk. Expressed in an outer layer of the pupal developing CNS. Also expressed in pupal retina: cone cells and primary pigment cells.

It localises to the cell membrane. The protein resides in the cell junction. The protein localises to the gap junction. Functionally, structural components of the gap junctions. The polypeptide is Innexin inx6 (Inx6) (Drosophila melanogaster (Fruit fly)).